Reading from the N-terminus, the 392-residue chain is Tryptophan synthase beta chain (392 aa).

The residue at position 84 (Lys-84) is an N6-(pyridoxal phosphate)lysine.

It belongs to the TrpB family. In terms of assembly, tetramer of two alpha and two beta chains. The cofactor is pyridoxal 5'-phosphate.

It catalyses the reaction (1S,2R)-1-C-(indol-3-yl)glycerol 3-phosphate + L-serine = D-glyceraldehyde 3-phosphate + L-tryptophan + H2O. Its pathway is amino-acid biosynthesis; L-tryptophan biosynthesis; L-tryptophan from chorismate: step 5/5. Its function is as follows. The beta subunit is responsible for the synthesis of L-tryptophan from indole and L-serine. The polypeptide is Tryptophan synthase beta chain (Campylobacter jejuni subsp. jejuni serotype O:6 (strain 81116 / NCTC 11828)).